The chain runs to 173 residues: Mediator of RNA polymerase II transcription subunit 10 (173 aa).

Residues 1-10 (MVQQQQQSQQ) show a composition bias toward low complexity. Positions 1-42 (MVQQQQQSQQRMMELHERNDREKLARKTEKEREEERRKQEDD) are disordered. Positions 13-42 (MELHERNDREKLARKTEKEREEERRKQEDD) are enriched in basic and acidic residues.

It belongs to the Mediator complex subunit 10 family. Component of the Mediator complex.

The protein localises to the nucleus. Its function is as follows. Component of the Mediator complex, a coactivator involved in the regulated transcription of nearly all RNA polymerase II-dependent genes. Mediator functions as a bridge to convey information from gene-specific regulatory proteins to the basal RNA polymerase II transcription machinery. Mediator is recruited to promoters by direct interactions with regulatory proteins and serves as a scaffold for the assembly of a functional preinitiation complex with RNA polymerase II and the general transcription factors. Required for germ cell development and for transcriptional activation of certain stage-specific inducible promoters. The sequence is that of Mediator of RNA polymerase II transcription subunit 10 (mdt-10) from Caenorhabditis elegans.